We begin with the raw amino-acid sequence, 60 residues long: U20-myrmicitoxin-Mri1a (60 aa).

The N-terminal stretch at 1–24 is a signal peptide; it reads MKSVILLFAVIAIIVAVIIPAING. Positions 25-34 are excised as a propeptide; sequence ESSSNPSANA.

This sequence belongs to the formicidae venom precursor-01 superfamily. As to expression, expressed by the venom gland.

It localises to the secreted. Induces paralysis 5 minutes after injection into blowflies (L.caesar), and then death within 24 hours. May have antimicrobial properties, like most ant linear peptides. The protein is U20-myrmicitoxin-Mri1a of Manica rubida (European giant red ant).